Here is a 1724-residue protein sequence, read N- to C-terminus: Protein scribble homolog (1724 aa).

Positions 1-821 (MLKCIPLWRC…MTVLRERMVE (821 aa)) are sufficient for targeting to adherens junction. LRR repeat units lie at residues 11–34 (NRHV…IYRY), 35–58 (NRSL…FFRL), 59–81 (HNLR…VANF), 83–105 (QLVE…KFCQ), 107–127 (LEIA…FTQL), 128–150 (RGLA…IGNL), 151–174 (SNLV…SFLV), 176–196 (LEQL…LGAL), 197–219 (PNLR…LGNL), 221–242 (QLVC…ISGL), 244–265 (ALTD…IGSL), 266–288 (KKLS…IGEC), 289–311 (ENLT…LGKL), 312–334 (KKLT…LGGC), 336–357 (SLNV…LANA), 359–380 (ELHV…LANL), and 382–405 (LKAM…DDEQ). Disordered regions lie at residues 451-484 (RDDS…LKVM), 496-620 (YTAR…RKDT), and 646-683 (SHDG…HTPF). Low complexity predominate over residues 518–534 (SNQSHDSQASSSTTSAT). Acidic residues predominate over residues 554-567 (VQEEEDLDEMEVEY). Over residues 574-583 (FAEEPIIRGG) the composition is skewed to basic and acidic residues. Acidic residues predominate over residues 584–598 (DEDDDYDNDDDDAER). A compositionally biased stretch (basic and acidic residues) spans 611 to 620 (EKQRLIRKDT). The span at 661–678 (RDGEDDEEEEEDEDEEDD) shows a compositional bias: acidic residues. PDZ domains lie at 731-818 (TLSI…LRER), 867-955 (ATCL…DREQ), 1005-1094 (EVTL…RRDP), and 1101-1193 (EIVI…CDGF). Residues 955 to 995 (QSSVGGASPRTRPHSPPPPEPSDSPEQEDGGDEHLGNHLNC) form a disordered region. Disordered regions lie at residues 1283–1407 (LQKV…DRQK), 1414–1433 (KQQT…EDDL), 1449–1468 (REFM…AKQV), and 1488–1555 (SLGS…GESA). The span at 1295 to 1306 (FRIDSPVRDAAH) shows a compositional bias: basic and acidic residues. Composition is skewed to polar residues over residues 1308-1329 (PHNS…NAST), 1346-1357 (PASQDGHSSPNP), and 1364-1385 (PINS…KQPS). Positions 1395-1407 (HSPEQRSFKDRQK) are enriched in basic and acidic residues. Residues 1430–1461 (EDDLKKMKEEEAKRIEQRAREFMLDEDEEEEE) are a coiled coil. The span at 1453–1463 (LDEDEEEEEED) shows a compositional bias: acidic residues. Residues 1490-1506 (GSPTSRQCATPPNYSAT) are compositionally biased toward polar residues. A compositionally biased stretch (low complexity) spans 1507 to 1518 (PPSHCGSSGPSS). Positions 1521–1538 (GKGDSQRNSVEDSFRLEQ) are enriched in basic and acidic residues. At Ser-1609 the chain carries Phosphoserine. The disordered stretch occupies residues 1621 to 1684 (IAKSKEGKKR…FMDESSSNAV (64 aa)). Positions 1623–1632 (KSKEGKKRGT) are enriched in basic and acidic residues.

Palmitoylated.

The protein resides in the cell membrane. It is found in the cell junction. The protein localises to the adherens junction. It localises to the cell projection. Its subcellular location is the lamellipodium. The protein resides in the cytoplasm. It is found in the postsynapse. The protein localises to the presynapse. Functionally, scaffold protein involved in different aspects of polarized cells differentiation regulating epithelial and neuronal morphogenesis. Regulates the caudal migration of the nVII motor neurons. Required for convergent extension movements during gastrulation. The chain is Protein scribble homolog (scrib) from Danio rerio (Zebrafish).